The sequence spans 117 residues: NADH-ubiquinone oxidoreductase chain 3 (117 aa).

3 consecutive transmembrane segments (helical) span residues 1-21 (MLSLTYIVGIASALVIILLLV), 56-76 (FFLVAILFLLFDLEIALILPY), and 86-106 (TFYNYWLVMLLVVVLTFGLMY).

Belongs to the complex I subunit 3 family.

The protein resides in the mitochondrion membrane. The enzyme catalyses a ubiquinone + NADH + 5 H(+)(in) = a ubiquinol + NAD(+) + 4 H(+)(out). Its function is as follows. Core subunit of the mitochondrial membrane respiratory chain NADH dehydrogenase (Complex I) that is believed to belong to the minimal assembly required for catalysis. Complex I functions in the transfer of electrons from NADH to the respiratory chain. The immediate electron acceptor for the enzyme is believed to be ubiquinone. The polypeptide is NADH-ubiquinone oxidoreductase chain 3 (ND3) (Branchiostoma lanceolatum (Common lancelet)).